The sequence spans 182 residues: Ribosome-recycling factor (182 aa).

It belongs to the RRF family.

It localises to the cytoplasm. Functionally, responsible for the release of ribosomes from messenger RNA at the termination of protein biosynthesis. May increase the efficiency of translation by recycling ribosomes from one round of translation to another. This Prochlorococcus marinus (strain AS9601) protein is Ribosome-recycling factor.